A 659-amino-acid chain; its full sequence is Interferon-induced GTP-binding protein Mx1 (659 aa).

Met-1 carries the N-acetylmethionine modification. A disordered region spans residues Met-1 to Cys-40. In terms of domain architecture, Dynamin-type G spans Asp-65 to Pro-338. The interval Gly-75–Ser-82 is G1 motif. GTP is bound at residue Gly-75–Ser-82. The tract at residues Val-100–Arg-102 is G2 motif. Residues Asp-176–Gly-179 are G3 motif. Residues Asp-176–Ile-180 and Thr-245–Asp-248 each bind GTP. The tract at residues Thr-245–Asp-248 is G4 motif. The segment at Lys-277–Gly-280 is G5 motif. The segment at Leu-339–Glu-364 is bundle signaling element (BSE). Residues Glu-364 to Cys-531 are middle domain. Residues Glu-365–Glu-629 are stalk. The tract at residues Lys-552–Lys-555 is critical for lipid-binding. The 89-residue stretch at Leu-571–Gly-659 folds into the GED domain.

Belongs to the TRAFAC class dynamin-like GTPase superfamily. Dynamin/Fzo/YdjA family. As to quaternary structure, homooligomer. Oligomerizes into multimeric filamentous or ring-like structures by virtue of its stalk domain. Oligomerization is critical for GTPase activity, protein stability, and recognition of viral target structures. Interacts with TRPC1, TRPC3, TRPC4, TRPC5, TRPC6 and TRPC7. Interacts with HSPA5. Interacts with TUBB/TUBB5. Interacts with DDX39A and DDX39B. ISGylated.

The protein localises to the cytoplasm. Its subcellular location is the endoplasmic reticulum membrane. It localises to the perinuclear region. In terms of biological role, interferon-induced dynamin-like GTPase with antiviral activity. This chain is Interferon-induced GTP-binding protein Mx1 (MX1), found in Phoca vitulina (Harbor seal).